A 427-amino-acid polypeptide reads, in one-letter code: uncharacterized protein (427 aa).

Belongs to the CAF1 family.

This is an uncharacterized protein from Schizosaccharomyces pombe (strain 972 / ATCC 24843) (Fission yeast).